The chain runs to 121 residues: Two-component response regulator ORR12 (121 aa).

The Response regulatory domain occupies 5–121 (HVLVVDDTLV…VDLPRILNYI (117 aa)). 4-aspartylphosphate is present on Asp-55.

It belongs to the ARR family. Type-A subfamily. Two-component system major event consists of a His-to-Asp phosphorelay between a sensor histidine kinase (HK) and a response regulator (RR). In plants, the His-to-Asp phosphorelay involves an additional intermediate named Histidine-containing phosphotransfer protein (HPt). This multistep phosphorelay consists of a His-Asp-His-Asp sequential transfer of a phosphate group between first a His and an Asp of the HK protein, followed by the transfer to a conserved His of the HPt protein and finally the transfer to an Asp in the receiver domain of the RR protein. Expressed in flowers and panicles.

Functionally, functions as a response regulator involved in His-to-Asp phosphorelay signal transduction system. Phosphorylation of the Asp residue in the receiver domain activates the ability of the protein to promote the transcription of target genes. Type-A response regulators seem to act as negative regulators of the cytokinin signaling. The chain is Two-component response regulator ORR12 from Oryza sativa subsp. japonica (Rice).